A 364-amino-acid polypeptide reads, in one-letter code: Chorismate synthase (364 aa).

NADP(+) contacts are provided by R48 and R54. FMN-binding positions include 125 to 127 (RSS), 238 to 239 (NA), G278, 293 to 297 (KPTSS), and R319.

This sequence belongs to the chorismate synthase family. In terms of assembly, homotetramer. Requires FMNH2 as cofactor.

It catalyses the reaction 5-O-(1-carboxyvinyl)-3-phosphoshikimate = chorismate + phosphate. Its pathway is metabolic intermediate biosynthesis; chorismate biosynthesis; chorismate from D-erythrose 4-phosphate and phosphoenolpyruvate: step 7/7. Catalyzes the anti-1,4-elimination of the C-3 phosphate and the C-6 proR hydrogen from 5-enolpyruvylshikimate-3-phosphate (EPSP) to yield chorismate, which is the branch point compound that serves as the starting substrate for the three terminal pathways of aromatic amino acid biosynthesis. This reaction introduces a second double bond into the aromatic ring system. In Marinobacter nauticus (strain ATCC 700491 / DSM 11845 / VT8) (Marinobacter aquaeolei), this protein is Chorismate synthase.